Consider the following 199-residue polypeptide: Recombination protein RecR (199 aa).

The segment at cysteine 56 to cysteine 71 adopts a C4-type zinc-finger fold. The Toprim domain maps to serine 79–proline 174.

Belongs to the RecR family.

In terms of biological role, may play a role in DNA repair. It seems to be involved in an RecBC-independent recombinational process of DNA repair. It may act with RecF and RecO. The protein is Recombination protein RecR of Frankia casuarinae (strain DSM 45818 / CECT 9043 / HFP020203 / CcI3).